A 433-amino-acid chain; its full sequence is Delta-aminolevulinic acid dehydratase, chloroplastic (433 aa).

Residues 1–56 (MASTFNIPCNAGTIKNFNNSQRNLGFSSNLGINFAKTRFSNCGDSGRIPSQLVVRA) constitute a chloroplast transit peptide. A disordered region spans residues 83 to 115 (NAPSAPPVPPTPKAPSGTPSVSPLSLGRRPRRN). A compositionally biased stretch (pro residues) spans 86-95 (SAPPVPPTPK). Catalysis depends on lysine 301, which acts as the Schiff-base intermediate with substrate. 5-aminolevulinate-binding residues include arginine 311 and lysine 323. Mg(2+) is bound at residue glutamate 339. The Schiff-base intermediate with substrate role is filled by lysine 354. Positions 380 and 419 each coordinate 5-aminolevulinate.

It belongs to the ALAD family. In terms of assembly, homooctamer. It depends on Mg(2+) as a cofactor.

Its subcellular location is the plastid. It is found in the chloroplast. The catalysed reaction is 2 5-aminolevulinate = porphobilinogen + 2 H2O + H(+). It functions in the pathway porphyrin-containing compound metabolism; protoporphyrin-IX biosynthesis; coproporphyrinogen-III from 5-aminolevulinate: step 1/4. Catalyzes an early step in the biosynthesis of tetrapyrroles. Binds two molecules of 5-aminolevulinate per subunit, each at a distinct site, and catalyzes their condensation to form porphobilinogen. This chain is Delta-aminolevulinic acid dehydratase, chloroplastic (HEMB), found in Spinacia oleracea (Spinach).